Reading from the N-terminus, the 151-residue chain is Coiled-coil-helix-coiled-coil-helix domain-containing protein 2 (151 aa).

Disordered stretches follow at residues 1–50 (MPRG…AAAP) and 77–111 (GHAI…AQQQ). Low complexity predominate over residues 10-26 (SRMAPPASRAPQMRAAP). The span at 27-38 (RPAPVAQPPAAA) shows a compositional bias: pro residues. Composition is skewed to low complexity over residues 39 to 50 (PPSAVGSSAAAP) and 100 to 111 (QEPQGTQPAQQQ). The 41-residue stretch at 111–151 (QQPCLYEIKQFLECAQNQGDIKLCEGFNEVLKQCRLANGLA) folds into the CHCH domain. 2 consecutive short sequence motifs (cx9C motif) follow at residues 114 to 124 (CLYEIKQFLEC) and 134 to 144 (CEGFNEVLKQC). 2 cysteine pairs are disulfide-bonded: cysteine 114-cysteine 144 and cysteine 124-cysteine 134.

Interacts with RBPJ.

The protein localises to the nucleus. The protein resides in the mitochondrion. Its subcellular location is the mitochondrion intermembrane space. Functionally, transcription factor. Binds to the oxygen responsive element of COX4I2 and activates its transcription under hypoxia conditions (4% oxygen), as well as normoxia conditions (20% oxygen). The chain is Coiled-coil-helix-coiled-coil-helix domain-containing protein 2 (CHCHD2) from Homo sapiens (Human).